Consider the following 356-residue polypeptide: 1,2-phenylacetyl-CoA epoxidase, subunit E (356 aa).

Positions 2 to 106 (TTFHSLTVAK…MVPQGHFGYQ (105 aa)) constitute an FAD-binding FR-type domain. An oxidoreductase region spans residues 112 to 228 (QGRYLAIAAG…AAMMDDAETA (117 aa)). The region spanning 262–354 (QKVTVRQDGR…DVVVDFDAKG (93 aa)) is the 2Fe-2S ferredoxin-type domain. 4 residues coordinate [2Fe-2S] cluster: Cys-299, Cys-304, Cys-307, and Cys-337.

This sequence in the N-terminal section; belongs to the FAD-binding oxidoreductase type 6 family. Requires [2Fe-2S] cluster as cofactor. The cofactor is FAD.

It functions in the pathway aromatic compound metabolism; phenylacetate degradation. Its function is as follows. Component of 1,2-phenylacetyl-CoA epoxidase multicomponent enzyme system which catalyzes the reduction of phenylacetyl-CoA (PA-CoA) to form 1,2-epoxyphenylacetyl-CoA. The subunit E is a reductase with a preference for NADPH and FAD, capable of reducing cytochrome c. The chain is 1,2-phenylacetyl-CoA epoxidase, subunit E (paaE) from Escherichia coli (strain K12).